The following is a 515-amino-acid chain: Fatty acyl-CoA reductase 1 (515 aa).

Residues 1 to 465 lie on the Cytoplasmic side of the membrane; the sequence is MVSIPEYYEG…ARKHLNKLRN (465 aa). Residues 451 to 507 are necessary and sufficient for PEX19-mediated localization into peroxisome membrane; the sequence is SGLPAARKHLNKLRNIRYGFNTILVILIWRIFIARSQMARNIWYFVVSLCYKFLSYF. A helical transmembrane segment spans residues 466–483; the sequence is IRYGFNTILVILIWRIFI. Residues 484-515 are Peroxisomal-facing; sequence ARSQMARNIWYFVVSLCYKFLSYFRASSTMRY.

The protein belongs to the fatty acyl-CoA reductase family. As to quaternary structure, interacts with PEX19; PEX19 mediates the targeting of FAR1 to peroxisomes.

The protein resides in the peroxisome membrane. The enzyme catalyses a long-chain fatty acyl-CoA + 2 NADPH + 2 H(+) = a long-chain primary fatty alcohol + 2 NADP(+) + CoA. It carries out the reaction hexadecanoyl-CoA + 2 NADPH + 2 H(+) = hexadecan-1-ol + 2 NADP(+) + CoA. The catalysed reaction is octadecanoyl-CoA + 2 NADPH + 2 H(+) = octadecan-1-ol + 2 NADP(+) + CoA. It catalyses the reaction (9Z)-octadecenoyl-CoA + 2 NADPH + 2 H(+) = (9Z)-octadecen-1-ol + 2 NADP(+) + CoA. The enzyme catalyses (9Z,12Z)-octadecadienoyl-CoA + 2 NADPH + 2 H(+) = (9Z,12Z)-octadecadien-1-ol + 2 NADP(+) + CoA. It carries out the reaction eicosanoyl-CoA + 2 NADPH + 2 H(+) = eicosan-1-ol + 2 NADP(+) + CoA. The catalysed reaction is 16-methylheptadecanoyl-CoA + 2 NADPH + 2 H(+) = 16-methylheptadecan-1-ol + 2 NADP(+) + CoA. It catalyses the reaction 18-methylnonadecanoyl-CoA + 2 NADPH + 2 H(+) = 18-methylnonadecan-1-ol + 2 NADP(+) + CoA. Functionally, catalyzes the reduction of saturated and unsaturated C16 or C18 fatty acyl-CoA to fatty alcohols. It plays an essential role in the production of ether lipids/plasmalogens which synthesis requires fatty alcohols. In parallel, it is also required for wax monoesters production since fatty alcohols also constitute a substrate for their synthesis. Catalyzes the reduction of saturated and unsaturated C16 or C18 fatty acyl-CoA to fatty alcohols. It plays an essential role in the production of ether lipids/plasmalogens which synthesis requires fatty alcohols. In parallel, it is also required for wax monoesters production since fatty alcohols also constitute a substrate for their synthesis. The protein is Fatty acyl-CoA reductase 1 of Rattus norvegicus (Rat).